The sequence spans 240 residues: Glyceraldehyde 3-phosphate phosphatase (240 aa).

Belongs to the HAD-like hydrolase superfamily. Requires Mg(2+) as cofactor.

In terms of biological role, catalyzes the dephosphorylation of D,L-glyceraldehyde 3-phosphate in vitro. The protein is Glyceraldehyde 3-phosphate phosphatase of Pyrococcus furiosus (strain ATCC 43587 / DSM 3638 / JCM 8422 / Vc1).